Here is a 411-residue protein sequence, read N- to C-terminus: D-ribitol-5-phosphate cytidylyltransferase (411 aa).

This sequence belongs to the IspD/TarI cytidylyltransferase family. IspD subfamily. As to quaternary structure, homodimer.

The protein resides in the cytoplasm. The protein localises to the cytosol. The enzyme catalyses D-ribitol 5-phosphate + CTP + H(+) = CDP-L-ribitol + diphosphate. It catalyses the reaction D-ribose 5-phosphate + CTP + H(+) = CDP-D-ribose + diphosphate. The catalysed reaction is D-ribulose 5-phosphate + CTP + H(+) = CDP-D-ribulose + diphosphate. Its pathway is protein modification; protein glycosylation. Cytidylyltransferase required for protein O-linked mannosylation. Catalyzes the formation of CDP-ribitol nucleotide sugar from D-ribitol 5-phosphate. CDP-ribitol is a substrate of FKTN during the biosynthesis of the phosphorylated O-mannosyl trisaccharide (N-acetylgalactosamine-beta-3-N-acetylglucosamine-beta-4-(phosphate-6-)mannose), a carbohydrate structure present in alpha-dystroglycan (DAG1), which is required for binding laminin G-like domain-containing extracellular proteins with high affinity. Shows activity toward other pentose phosphate sugars and mediates formation of CDP-ribulose or CDP-ribose using CTP and ribulose-5-phosphate or ribose-5-phosphate, respectively. Not involved in dolichol production. The chain is D-ribitol-5-phosphate cytidylyltransferase (crppa) from Xenopus tropicalis (Western clawed frog).